We begin with the raw amino-acid sequence, 337 residues long: tRNA N6-adenosine threonylcarbamoyltransferase (337 aa).

Positions 111 and 115 each coordinate Fe cation. Residues 134–138 (LVSGG), aspartate 167, glycine 180, and asparagine 272 contribute to the substrate site. Aspartate 300 is a binding site for Fe cation.

The protein belongs to the KAE1 / TsaD family. It depends on Fe(2+) as a cofactor.

It is found in the cytoplasm. It carries out the reaction L-threonylcarbamoyladenylate + adenosine(37) in tRNA = N(6)-L-threonylcarbamoyladenosine(37) in tRNA + AMP + H(+). Required for the formation of a threonylcarbamoyl group on adenosine at position 37 (t(6)A37) in tRNAs that read codons beginning with adenine. Is involved in the transfer of the threonylcarbamoyl moiety of threonylcarbamoyl-AMP (TC-AMP) to the N6 group of A37, together with TsaE and TsaB. TsaD likely plays a direct catalytic role in this reaction. The protein is tRNA N6-adenosine threonylcarbamoyltransferase of Shewanella amazonensis (strain ATCC BAA-1098 / SB2B).